The chain runs to 307 residues: uncharacterized protein (307 aa).

This is an uncharacterized protein from Archaeoglobus fulgidus (strain ATCC 49558 / DSM 4304 / JCM 9628 / NBRC 100126 / VC-16).